The chain runs to 312 residues: tRNA-cytidine(32) 2-sulfurtransferase (312 aa).

Positions 48–53 (SGGKDS) match the PP-loop motif motif. [4Fe-4S] cluster contacts are provided by cysteine 123, cysteine 126, and cysteine 214.

Belongs to the TtcA family. As to quaternary structure, homodimer. Mg(2+) is required as a cofactor. The cofactor is [4Fe-4S] cluster.

The protein resides in the cytoplasm. The enzyme catalyses cytidine(32) in tRNA + S-sulfanyl-L-cysteinyl-[cysteine desulfurase] + AH2 + ATP = 2-thiocytidine(32) in tRNA + L-cysteinyl-[cysteine desulfurase] + A + AMP + diphosphate + H(+). It functions in the pathway tRNA modification. Catalyzes the ATP-dependent 2-thiolation of cytidine in position 32 of tRNA, to form 2-thiocytidine (s(2)C32). The sulfur atoms are provided by the cysteine/cysteine desulfurase (IscS) system. This is tRNA-cytidine(32) 2-sulfurtransferase from Mannheimia succiniciproducens (strain KCTC 0769BP / MBEL55E).